We begin with the raw amino-acid sequence, 282 residues long: Pantothenate synthetase (282 aa).

Residue 30 to 37 (MGYLHEGH) coordinates ATP. His37 acts as the Proton donor in catalysis. Gln61 lines the (R)-pantoate pocket. Gln61 provides a ligand contact to beta-alanine. Position 147–150 (147–150 (GMKD)) interacts with ATP. A (R)-pantoate-binding site is contributed by Gln153. ATP is bound by residues Val176 and 184–187 (KSSR).

It belongs to the pantothenate synthetase family. As to quaternary structure, homodimer.

The protein resides in the cytoplasm. The catalysed reaction is (R)-pantoate + beta-alanine + ATP = (R)-pantothenate + AMP + diphosphate + H(+). Its pathway is cofactor biosynthesis; (R)-pantothenate biosynthesis; (R)-pantothenate from (R)-pantoate and beta-alanine: step 1/1. Functionally, catalyzes the condensation of pantoate with beta-alanine in an ATP-dependent reaction via a pantoyl-adenylate intermediate. This Bacillus cereus (strain ATCC 10987 / NRS 248) protein is Pantothenate synthetase.